The following is a 316-amino-acid chain: Polyprenyl transferase ausN (316 aa).

9 consecutive transmembrane segments (helical) span residues 45-65 (VVGVAYTAAISPVTLPATFLL), 69-89 (VILSLWGFCIRSAGCAWNDLI), 108-128 (GAVSPSGAALLTAFMFGCGGS), 129-149 (LLLLLPSQCAFEAAIVVFFAL), 163-183 (LILTNIAWAIPMAMSSLDMNP), 188-208 (IPTLAMSFSIASVIVMIDIVY), 233-253 (DQIAYSLFFSGTLSLLAGGIL), 256-276 (LGIPFLIFSVGGHFVGFLRFL), and 296-316 (SCLLATVFLVFGLFFEYCVRL).

It belongs to the UbiA prenyltransferase family. Requires Mg(2+) as cofactor.

It is found in the membrane. It carries out the reaction 3,5-dimethylorsellinate + (2E,6E)-farnesyl diphosphate = (3R)-3-farnesyl-6-hydroxy-2,3,5-trimethyl-4-oxocyclohexa-1,5-diene-1-carboxylate + diphosphate + H(+). Its pathway is secondary metabolite biosynthesis; terpenoid biosynthesis. Its function is as follows. Polyprenyl transferase; part of the gene cluster A that mediates the biosynthesis of the fungal meroterpenoid acetoxydehydroaustin. The first step of the pathway is the synthesis of 3,5-dimethylorsellinic acid by the polyketide synthase ausA. 3,5-dimethylorsellinic acid is then prenylated by the polyprenyl transferase ausN. Further epoxidation by the FAD-dependent monooxygenase ausM and cyclization by the probable terpene cyclase ausL lead to the formation of protoaustinoid A. Protoaustinoid A is then oxidized to spiro-lactone preaustinoid A3 by the combined action of the FAD-binding monooxygenases ausB and ausC, and the dioxygenase ausE. Acid-catalyzed keto-rearrangement and ring contraction of the tetraketide portion of preaustinoid A3 by ausJ lead to the formation of preaustinoid A4. The aldo-keto reductase ausK, with the help of ausH, is involved in the next step by transforming preaustinoid A4 into isoaustinone which is in turn hydroxylated by the P450 monooxygenase ausI to form austinolide. The cytochrome P450 monooxygenase ausG then modifies austinolide to austinol. Austinol is further acetylated to austin by the O-acetyltransferase ausP, which spontaneously changes to dehydroaustin. The cytochrome P450 monooxygenase then converts dehydroaustin is into 7-dehydrodehydroaustin. The hydroxylation catalyzed by ausR permits the second O-acetyltransferase ausQ to add an additional acetyl group to the molecule, leading to the formation of acetoxydehydroaustin. Due to genetic rearrangements of the clusters and the subsequent loss of some enzymes, the end product of the Penicillium brasilianum austinoid biosynthesis clusters is acetoxydehydroaustin. The chain is Polyprenyl transferase ausN from Penicillium brasilianum.